Reading from the N-terminus, the 320-residue chain is Cytochrome f (320 aa).

An N-terminal signal peptide occupies residues 1-35; that stretch reads MQTRKTLSWIKEEITRSISVSLMIYIITGAYISNA. Tyrosine 36, cysteine 56, cysteine 59, and histidine 60 together coordinate heme. The helical transmembrane segment at 286–306 threads the bilayer; that stretch reads VQGLLFFLASVILAQIFLVLK.

It belongs to the cytochrome f family. In terms of assembly, the 4 large subunits of the cytochrome b6-f complex are cytochrome b6, subunit IV (17 kDa polypeptide, petD), cytochrome f and the Rieske protein, while the 4 small subunits are PetG, PetL, PetM and PetN. The complex functions as a dimer. Heme is required as a cofactor.

The protein localises to the plastid. It is found in the chloroplast thylakoid membrane. Component of the cytochrome b6-f complex, which mediates electron transfer between photosystem II (PSII) and photosystem I (PSI), cyclic electron flow around PSI, and state transitions. The chain is Cytochrome f from Populus trichocarpa (Western balsam poplar).